The chain runs to 561 residues: Mercuric reductase (561 aa).

One can recognise an HMA domain in the interval 1 to 65; sequence MTTLKITGMT…AVAGLGYEAT (65 aa). A metal cation is bound by residues cysteine 11 and cysteine 14. Alanine 110, glycine 130, and threonine 135 together coordinate FAD. A disulfide bridge links cysteine 136 with cysteine 141. FAD contacts are provided by lysine 145, alanine 211, aspartate 403, and valine 411. Hg(2+) is bound by residues cysteine 558 and cysteine 559.

The protein belongs to the class-I pyridine nucleotide-disulfide oxidoreductase family. Homodimer. FAD serves as cofactor.

It carries out the reaction Hg + NADP(+) + H(+) = Hg(2+) + NADPH. Resistance to Hg(2+) in bacteria appears to be governed by a specialized system which includes mercuric reductase. MerA protein is responsible for volatilizing mercury as Hg(0). This Enterobacter agglomerans (Erwinia herbicola) protein is Mercuric reductase (merA).